A 711-amino-acid polypeptide reads, in one-letter code: Hepatocyte growth factor-like protein (711 aa).

Positions 1 to 18 are cleaved as a signal peptide; the sequence is MGWLPLLLLLTQCLGVPG. Positions 21–105 constitute a PAN domain; it reads SPLNDFQVLR…GRCDLFQKKD (85 aa). 20 disulfide bridges follow: Cys-56-Cys-78, Cys-60-Cys-66, Cys-110-Cys-186, Cys-131-Cys-169, Cys-157-Cys-181, Cys-191-Cys-268, Cys-194-Cys-324, Cys-212-Cys-251, Cys-240-Cys-263, Cys-283-Cys-361, Cys-304-Cys-343, Cys-332-Cys-355, Cys-370-Cys-448, Cys-391-Cys-431, Cys-419-Cys-443, Cys-468-Cys-588, Cys-507-Cys-523, Cys-602-Cys-667, Cys-632-Cys-646, and Cys-657-Cys-685. The N-linked (GlcNAc...) asparagine glycan is linked to Asn-72. Kringle domains lie at 110–186, 191–268, 283–361, and 370–448; these read CIMN…IKSC, CVWC…LPRC, CFRG…IRRC, and CYHG…LRRC. N-linked (GlcNAc...) asparagine glycosylation occurs at Asn-296. Residues 484-709 enclose the Peptidase S1 domain; sequence VVGGHPGNSP…FVDWIHKVMR (226 aa). Residue Asn-615 is glycosylated (N-linked (GlcNAc...) asparagine).

The protein belongs to the peptidase S1 family. Plasminogen subfamily. Dimer of an alpha chain and a beta chain linked by a disulfide bond. Interacts (via beta chain) with MST1R (via SEMA domain). Cleaved after Arg-483, probably by HPN/Hepsin, to yield the active form consisting of two disulfide-linked chains.

Its subcellular location is the secreted. This Homo sapiens (Human) protein is Hepatocyte growth factor-like protein (MST1).